The following is a 69-amino-acid chain: DNA-directed RNA polymerase subunit omega (69 aa).

This sequence belongs to the RNA polymerase subunit omega family. The RNAP catalytic core consists of 2 alpha, 1 beta, 1 beta' and 1 omega subunit. When a sigma factor is associated with the core the holoenzyme is formed, which can initiate transcription.

The catalysed reaction is RNA(n) + a ribonucleoside 5'-triphosphate = RNA(n+1) + diphosphate. Functionally, promotes RNA polymerase assembly. Latches the N- and C-terminal regions of the beta' subunit thereby facilitating its interaction with the beta and alpha subunits. The protein is DNA-directed RNA polymerase subunit omega of Heliobacterium modesticaldum (strain ATCC 51547 / Ice1).